We begin with the raw amino-acid sequence, 613 residues long: Maintenance of telomere capping protein 6 (613 aa).

A signal peptide spans Met-1–Gly-17. Over Ser-18–Lys-557 the chain is Extracellular. N-linked (GlcNAc...) asparagine glycosylation is found at Asn-31, Asn-111, Asn-128, Asn-136, Asn-177, Asn-202, Asn-230, Asn-242, Asn-313, Asn-328, Asn-343, Asn-375, Asn-388, Asn-417, Asn-424, Asn-425, Asn-479, and Asn-480. Residues Phe-558 to Ile-578 traverse the membrane as a helical segment. Topologically, residues Glu-579 to Ser-613 are cytoplasmic.

The protein belongs to the MTC6 family.

It localises to the membrane. Functionally, may be involved in telomere capping. The protein is Maintenance of telomere capping protein 6 (MTC6) of Candida albicans (strain WO-1) (Yeast).